Consider the following 420-residue polypeptide: CinA-like protein (420 aa).

This sequence belongs to the CinA family.

The polypeptide is CinA-like protein (Geotalea uraniireducens (strain Rf4) (Geobacter uraniireducens)).